A 422-amino-acid chain; its full sequence is Exopolygalacturonase clone GBGE184 (422 aa).

The N-terminal stretch at 1–31 is a signal peptide; the sequence is MANARSLVAKANNINVGSLILMALVFGSCVA. 5 PbH1 repeats span residues 200-226, 227-248, 250-270, 280-301, and 310-331; these read TENVNIQNIKLTAPAESPNTDGIHLSN, ADNVSILDSTIATGDDCVSVGR, SNNVTVERVICGPGHGLSVGS, VSGIHVNNCTMIETDNGLRIKT, and AVDIKFENIIMQSVKNPIIIDQ. Asn229 is a glycosylation site (N-linked (GlcNAc...) asparagine). Asp241 serves as the catalytic Proton donor. Cys243 and Cys260 are disulfide-bonded. Asn252 carries N-linked (GlcNAc...) asparagine glycosylation. Residue His264 is part of the active site. Asn287 carries an N-linked (GlcNAc...) asparagine glycan. 2 cysteine pairs are disulfide-bonded: Cys366–Cys372 and Cys404–Cys420.

Belongs to the glycosyl hydrolase 28 family.

The protein localises to the secreted. The protein resides in the cell wall. It carries out the reaction [(1-&gt;4)-alpha-D-galacturonosyl](n) + H2O = alpha-D-galacturonate + [(1-&gt;4)-alpha-D-galacturonosyl](n-1). May function in depolymerizing pectin during pollen development, germination, and tube growth. Acts as an exo-polygalacturonase. The polypeptide is Exopolygalacturonase clone GBGE184 (PGA3) (Arabidopsis thaliana (Mouse-ear cress)).